A 508-amino-acid chain; its full sequence is Glycerol kinase (508 aa).

Thr-14 contributes to the ADP binding site. Residues Thr-14, Thr-15, and Ser-16 each contribute to the ATP site. Thr-14 contacts sn-glycerol 3-phosphate. Position 18 (Arg-18) interacts with ADP. Sn-glycerol 3-phosphate-binding residues include Arg-84, Glu-85, and Tyr-136. Positions 84, 85, and 136 each coordinate glycerol. His-232 carries the phosphohistidine; by HPr modification. Position 246 (Asp-246) interacts with sn-glycerol 3-phosphate. Positions 246 and 247 each coordinate glycerol. ADP contacts are provided by Thr-268 and Gly-311. Residues Thr-268, Gly-311, Gln-315, and Gly-412 each contribute to the ATP site. Residues Gly-412 and Asn-416 each coordinate ADP.

Belongs to the FGGY kinase family. In terms of assembly, homotetramer and homodimer (in equilibrium). Post-translationally, the phosphoenolpyruvate-dependent sugar phosphotransferase system (PTS), including enzyme I, and histidine-containing protein (HPr) are required for the phosphorylation, which leads to the activation of the enzyme.

It catalyses the reaction glycerol + ATP = sn-glycerol 3-phosphate + ADP + H(+). It functions in the pathway polyol metabolism; glycerol degradation via glycerol kinase pathway; sn-glycerol 3-phosphate from glycerol: step 1/1. With respect to regulation, activated by phosphorylation and inhibited by fructose 1,6-bisphosphate (FBP). Its function is as follows. Key enzyme in the regulation of glycerol uptake and metabolism. Catalyzes the phosphorylation of glycerol to yield sn-glycerol 3-phosphate. The sequence is that of Glycerol kinase from Streptococcus pyogenes serotype M12 (strain MGAS2096).